We begin with the raw amino-acid sequence, 377 residues long: Actin depolymerising venom protein gelsolin 1 (377 aa).

An N-terminal signal peptide occupies residues 1–26; it reads MFRQMKLGSLATKLLLACFLVTCTSG. Gelsolin-like repeat units lie at residues 50 to 133, 174 to 243, and 298 to 368; these read FVPV…SEQF, IRVR…SSTS, and EKPL…PTAF.

In terms of tissue distribution, expressed by the venom gland (posterior main gland) (at protein level).

The protein localises to the secreted. This is Actin depolymerising venom protein gelsolin 1 from Platymeris rhadamanthus (Red spot assassin bug).